The sequence spans 157 residues: Methylglyoxal synthase (157 aa).

The MGS-like domain occupies 1-157 (MSKVKNIAVV…DFSSYTQRKL (157 aa)). Residues His-12, Lys-16, 38–41 (TGTT), and 71–72 (SG) contribute to the substrate site. The active-site Proton donor/acceptor is the Asp-77. Position 104 (His-104) interacts with substrate.

This sequence belongs to the methylglyoxal synthase family.

The catalysed reaction is dihydroxyacetone phosphate = methylglyoxal + phosphate. In terms of biological role, catalyzes the formation of methylglyoxal from dihydroxyacetone phosphate. This Maridesulfovibrio salexigens (strain ATCC 14822 / DSM 2638 / NCIMB 8403 / VKM B-1763) (Desulfovibrio salexigens) protein is Methylglyoxal synthase.